The following is a 216-amino-acid chain: Holliday junction branch migration complex subunit RuvA (216 aa).

The segment at Met1–Lys64 is domain I. Positions Ser65 to Thr143 are domain II. The segment at Ser144–Val163 is flexible linker. The segment at Leu164 to Arg216 is domain III.

The protein belongs to the RuvA family. In terms of assembly, homotetramer. Forms an RuvA(8)-RuvB(12)-Holliday junction (HJ) complex. HJ DNA is sandwiched between 2 RuvA tetramers; dsDNA enters through RuvA and exits via RuvB. An RuvB hexamer assembles on each DNA strand where it exits the tetramer. Each RuvB hexamer is contacted by two RuvA subunits (via domain III) on 2 adjacent RuvB subunits; this complex drives branch migration. In the full resolvosome a probable DNA-RuvA(4)-RuvB(12)-RuvC(2) complex forms which resolves the HJ.

It localises to the cytoplasm. In terms of biological role, the RuvA-RuvB-RuvC complex processes Holliday junction (HJ) DNA during genetic recombination and DNA repair, while the RuvA-RuvB complex plays an important role in the rescue of blocked DNA replication forks via replication fork reversal (RFR). RuvA specifically binds to HJ cruciform DNA, conferring on it an open structure. The RuvB hexamer acts as an ATP-dependent pump, pulling dsDNA into and through the RuvAB complex. HJ branch migration allows RuvC to scan DNA until it finds its consensus sequence, where it cleaves and resolves the cruciform DNA. The polypeptide is Holliday junction branch migration complex subunit RuvA (Francisella tularensis subsp. tularensis (strain WY96-3418)).